The sequence spans 573 residues: Sulfite reductase [NADPH] hemoprotein beta-component (573 aa).

Residues Cys436, Cys442, Cys481, and Cys485 each contribute to the [4Fe-4S] cluster site. Cys485 provides a ligand contact to siroheme.

This sequence belongs to the nitrite and sulfite reductase 4Fe-4S domain family. As to quaternary structure, alpha(8)-beta(8). The alpha component is a flavoprotein, the beta component is a hemoprotein. Siroheme is required as a cofactor. Requires [4Fe-4S] cluster as cofactor.

It catalyses the reaction hydrogen sulfide + 3 NADP(+) + 3 H2O = sulfite + 3 NADPH + 4 H(+). Its pathway is sulfur metabolism; hydrogen sulfide biosynthesis; hydrogen sulfide from sulfite (NADPH route): step 1/1. Component of the sulfite reductase complex that catalyzes the 6-electron reduction of sulfite to sulfide. This is one of several activities required for the biosynthesis of L-cysteine from sulfate. The polypeptide is Sulfite reductase [NADPH] hemoprotein beta-component (Alteromonas mediterranea (strain DSM 17117 / CIP 110805 / LMG 28347 / Deep ecotype)).